Consider the following 984-residue polypeptide: Ubiquitin conjugation factor E4 ufd-2 (984 aa).

The U-box domain occupies 909-982; that stretch reads DVPEEFKDPI…QEWICQKRNS (74 aa).

The protein belongs to the ubiquitin conjugation factor E4 family. Forms a complex composed of deubiquitinating enzyme atx-3, E4 ubiquitin-protein ligase ufd-2 and cdc-48.1; within the complex interacts with atx-3 and cdc-48.1 (via DDDLYN motif). Forms a complex composed of cdc-48.1, myosin chaperone unc-45, ubiquitin-protein ligases ufd-2 and chn-1; the complex targets myosin chaperone unc-45 for proteasomal degradation; within the complex interacts with cdc-48.1 (via DDDLYN motif), chn-1 and unc-45. Forms a complex composed of unc-45 and myosin heavy chain B unc-54; the complex targets unfolded unc-54 for proteasomal degradation; within the complex interacts with unc-45 (via TPR domain) and unc-54. Interacts with cdc-48.2 (via DDDLYN motif). As to expression, expressed in the germline (at protein level).

It is found in the cytoplasm. The protein localises to the nucleus membrane. It localises to the nucleus. Its subcellular location is the nucleolus. It carries out the reaction S-ubiquitinyl-[E2 ubiquitin-conjugating enzyme]-L-cysteine + [acceptor protein]-L-lysine = [E2 ubiquitin-conjugating enzyme]-L-cysteine + N(6)-ubiquitinyl-[acceptor protein]-L-lysine.. It participates in protein modification; protein ubiquitination. Functionally, acts as an E4 ubiquitin ligase mediating the assembly of polyubiquitin chains on substrates ubiquitinated by another E3 ubiquitin ligase. The elongation of preexisting ubiquitin chains preferentially targets ubiquitin 'Lys-29' and 'Lys-48' residues. Also functions as an E3 ligase in conjunction with specific E1 and E2 ligases. Probably by regulating protein ubiquitination at DNA damage repair sites, coordinates DNA double-strand-break repair and apoptosis in the germline. Required for germline apoptosis in response to DNA damage downstream of cep-1. Involved in the resolution of DNA-repair sites by promoting the release of rad-51 from DNA damage foci. In association with protein-ligase chn-1, acts as an E3/E4 ligase to poly-ubiquitinate lysine residues in the UCS domain of myosin chaperone unc-45. By targeting myosin chaperone unc-45 for proteasomal degradation, regulates myosin assembly in body wall muscles in association with cdc-48.1 and chn-1. However, in a contrasting study, acts as an E3 ligase, independently of chn-1, to poly-ubiquitinate unc-45 without promoting unc-45 proteasomal degradation. Instead, uses unc-45 as an adapter protein to recruit and poly-ubiquitinate unfolded myosin heavy chain B unc-54. This chain is Ubiquitin conjugation factor E4 ufd-2, found in Caenorhabditis elegans.